A 388-amino-acid chain; its full sequence is ATP phosphoribosyltransferase regulatory subunit (388 aa).

The protein belongs to the class-II aminoacyl-tRNA synthetase family. HisZ subfamily. In terms of assembly, heteromultimer composed of HisG and HisZ subunits.

It localises to the cytoplasm. Its pathway is amino-acid biosynthesis; L-histidine biosynthesis; L-histidine from 5-phospho-alpha-D-ribose 1-diphosphate: step 1/9. Required for the first step of histidine biosynthesis. May allow the feedback regulation of ATP phosphoribosyltransferase activity by histidine. The protein is ATP phosphoribosyltransferase regulatory subunit of Acinetobacter baylyi (strain ATCC 33305 / BD413 / ADP1).